The following is a 242-amino-acid chain: Protein Thf1 (242 aa).

The stretch at 178–209 (SSDKLQKDLDLYRSNLDKMQQLLTVIEDTLEA) forms a coiled coil. Positions 212–242 (KKRASQKLEKKPEVVEEKEHKENEEQQQSSN) are disordered. Basic and acidic residues predominate over residues 217-235 (QKLEKKPEVVEEKEHKENE).

This sequence belongs to the THF1 family.

May be involved in photosynthetic membrane biogenesis. This Crocosphaera subtropica (strain ATCC 51142 / BH68) (Cyanothece sp. (strain ATCC 51142)) protein is Protein Thf1.